A 78-amino-acid polypeptide reads, in one-letter code: Putative permease-like protein YdzE (78 aa).

Transmembrane regions (helical) follow at residues 2-22 (YLGI…LQLL), 27-47 (GGLF…ILLG), and 49-69 (QIGG…LLVI). Residues 2-70 (YLGIVSTACA…ILSGVLLVIK (69 aa)) enclose the EamA domain.

This sequence belongs to the EamA transporter family.

The protein resides in the cell membrane. The protein is Putative permease-like protein YdzE (ydzE) of Bacillus subtilis (strain 168).